The following is a 119-amino-acid chain: Ribonuclease P protein component (119 aa).

This sequence belongs to the RnpA family. Consists of a catalytic RNA component (M1 or rnpB) and a protein subunit.

The enzyme catalyses Endonucleolytic cleavage of RNA, removing 5'-extranucleotides from tRNA precursor.. Its function is as follows. RNaseP catalyzes the removal of the 5'-leader sequence from pre-tRNA to produce the mature 5'-terminus. It can also cleave other RNA substrates such as 4.5S RNA. The protein component plays an auxiliary but essential role in vivo by binding to the 5'-leader sequence and broadening the substrate specificity of the ribozyme. This is Ribonuclease P protein component from Nitrosococcus oceani (strain ATCC 19707 / BCRC 17464 / JCM 30415 / NCIMB 11848 / C-107).